A 149-amino-acid chain; its full sequence is Protein GR6 (149 aa).

In terms of tissue distribution, expressed in fetus (aged from 7 to 8 weeks). Weakly expressed in lymphocytes.

In Homo sapiens (Human), this protein is Protein GR6.